A 301-amino-acid chain; its full sequence is Phosphoribosylaminoimidazole-succinocarboxamide synthase (301 aa).

It belongs to the SAICAR synthetase family.

It carries out the reaction 5-amino-1-(5-phospho-D-ribosyl)imidazole-4-carboxylate + L-aspartate + ATP = (2S)-2-[5-amino-1-(5-phospho-beta-D-ribosyl)imidazole-4-carboxamido]succinate + ADP + phosphate + 2 H(+). It participates in purine metabolism; IMP biosynthesis via de novo pathway; 5-amino-1-(5-phospho-D-ribosyl)imidazole-4-carboxamide from 5-amino-1-(5-phospho-D-ribosyl)imidazole-4-carboxylate: step 1/2. This Cyberlindnera jadinii (Torula yeast) protein is Phosphoribosylaminoimidazole-succinocarboxamide synthase (ADE1).